The chain runs to 179 residues: Large ribosomal subunit protein uL5 (179 aa).

The protein belongs to the universal ribosomal protein uL5 family. In terms of assembly, part of the 50S ribosomal subunit; part of the 5S rRNA/L5/L18/L25 subcomplex. Contacts the 5S rRNA and the P site tRNA. Forms a bridge to the 30S subunit in the 70S ribosome.

Its function is as follows. This is one of the proteins that bind and probably mediate the attachment of the 5S RNA into the large ribosomal subunit, where it forms part of the central protuberance. In the 70S ribosome it contacts protein S13 of the 30S subunit (bridge B1b), connecting the 2 subunits; this bridge is implicated in subunit movement. Contacts the P site tRNA; the 5S rRNA and some of its associated proteins might help stabilize positioning of ribosome-bound tRNAs. This chain is Large ribosomal subunit protein uL5, found in Paraburkholderia phymatum (strain DSM 17167 / CIP 108236 / LMG 21445 / STM815) (Burkholderia phymatum).